Reading from the N-terminus, the 595-residue chain is Elongation factor 4 (595 aa).

The tr-type G domain occupies 1 to 183 (MNVRNFSIIA…AIVERIPPPP (183 aa)). Residues 13-18 (DHGKST) and 130-133 (NKID) contribute to the GTP site.

This sequence belongs to the TRAFAC class translation factor GTPase superfamily. Classic translation factor GTPase family. LepA subfamily.

It is found in the cell membrane. The enzyme catalyses GTP + H2O = GDP + phosphate + H(+). In terms of biological role, required for accurate and efficient protein synthesis under certain stress conditions. May act as a fidelity factor of the translation reaction, by catalyzing a one-codon backward translocation of tRNAs on improperly translocated ribosomes. Back-translocation proceeds from a post-translocation (POST) complex to a pre-translocation (PRE) complex, thus giving elongation factor G a second chance to translocate the tRNAs correctly. Binds to ribosomes in a GTP-dependent manner. The polypeptide is Elongation factor 4 (Deinococcus geothermalis (strain DSM 11300 / CIP 105573 / AG-3a)).